A 308-amino-acid chain; its full sequence is MLTTLLQSDLPGLPLRHCGKVRDVFDIPHKRLPVDTRSGEYLLIVATDRLSAFDVVLPDPIPGKGEILCQISNFWFQKTEHLMPNHLTGINVASVLPDGIDKTLYTQRAVVTKKLKPVRIEAIARGYLIGSGWKDYQRTGKVSGIQLPDGLQEAEKLPDPIFTPSTKAAVGHHDENIDFDTTVKMVGAELAERVRDATLRIYHFAAKYAAECGILLADTKFEFGTDIDGRLYVMDEMLTPDSSRYWPIDEYQVGTSPPSYDKQFVRNYLETLDWDKTAPGPTLPQDIIDRTRAKYTKALQQLAGINID.

It belongs to the SAICAR synthetase family.

It catalyses the reaction 5-amino-1-(5-phospho-D-ribosyl)imidazole-4-carboxylate + L-aspartate + ATP = (2S)-2-[5-amino-1-(5-phospho-beta-D-ribosyl)imidazole-4-carboxamido]succinate + ADP + phosphate + 2 H(+). The protein operates within purine metabolism; IMP biosynthesis via de novo pathway; 5-amino-1-(5-phospho-D-ribosyl)imidazole-4-carboxamide from 5-amino-1-(5-phospho-D-ribosyl)imidazole-4-carboxylate: step 1/2. The polypeptide is Phosphoribosylaminoimidazole-succinocarboxamide synthase (Xylella fastidiosa (strain 9a5c)).